We begin with the raw amino-acid sequence, 839 residues long: Autophagy-related protein 9A (839 aa).

Ala2 carries the post-translational modification N-acetylalanine. The Cytoplasmic portion of the chain corresponds to 2–61 (AQFDTEYQRLEASYSDSPPGEEDLLVHVAEGSKSPWHHIENLDLFFSRVYNLHQKNGFTC). Residues 8–11 (YQRL) carry the Tyrosine-based sorting signal motif. Residues Ser14, Ser16, and Ser18 each carry the phosphoserine modification. A helical transmembrane segment spans residues 62–84 (MLIGEMFELMQFLFVVAFTTFLV). Residues 85-128 (SCVDYDILFANKMVNHSLHPTEPVKVTLPDAFLPAQVCSARIQE) are Lumenal-facing. Asn99 carries an N-linked (GlcNAc...) asparagine glycan. The helical transmembrane segment at 129 to 154 (NGSLITILVIAGVFWIHRLIKFIYNI) threads the bilayer. Over 155–290 (CCYWEIHSFY…ELAQRLSNRI (136 aa)) the chain is Cytoplasmic. An intramembrane segment occupies 291-301 (LWIGIANFLLC). Residues 302 to 319 (PLILIWQILYAFFSYAEV) lie on the Cytoplasmic side of the membrane. Residues 320–328 (LKREPGALG) lie within the membrane without spanning it. Topologically, residues 329 to 371 (ARCWSLYGRCYLRHFNELEHELQSRLNRGYKPASKYMNCFLSP) are cytoplasmic. Residues 372 to 397 (LLTLLAKNGAFFAGSILAVLIALTIY) form a helical membrane-spanning segment. Residues 398-406 (DEDVLAVEH) are Lumenal-facing. The chain crosses the membrane as a helical span at residues 407-424 (VLTTVTLLGVTVTVCRSF). Topologically, residues 425–470 (IPDQHMVFCPEQLLRVILAHIHYMPDHWQGNAHRSQTRDEFAQLFQ) are cytoplasmic. Residues 471–480 (YKAVFILEEL) lie within the membrane without spanning it. Topologically, residues 481 to 483 (LSP) are cytoplasmic. The stretch at 484 to 492 (IVTPLILIF) is an intramembrane region. Residues 493–839 (CLRPRALEII…DELPPQVHKV (347 aa)) are Cytoplasmic-facing. Ser656 is modified (phosphoserine). 2 disordered regions span residues 657-686 (PLQPGAAPQGRVPSTMTGSGVDARTASSGS) and 717-839 (HKQQ…VHKV). The span at 724-736 (EPERHVWHRRESD) shows a compositional bias: basic and acidic residues. A phosphoserine mark is found at Ser735, Ser738, Ser741, and Ser828. Composition is skewed to acidic residues over residues 737–747 (ESGESAPEEGG) and 823–832 (VPEEGSEDEL).

Belongs to the ATG9 family. In terms of assembly, homotrimer; forms a homotrimer with a central pore that forms a path between the two membrane leaflets. Interacts (via cytoplasmic its C-terminus) with ATG2A. Interacts with SUPT20H. Interacts (via the tyrosine-based sorting signal motif) with AP4M1; promoting association with the AP-4 complex. Interacts with ARFIP1 and ARFIP2. Interacts with ATG4A; the interaction is direct and promotes ATG9A trafficking. Ufmylated in a DDRGK1 dependent manner.

The protein localises to the preautophagosomal structure membrane. The protein resides in the cytoplasmic vesicle. It is found in the autophagosome membrane. It localises to the golgi apparatus. Its subcellular location is the trans-Golgi network membrane. The protein localises to the late endosome membrane. The protein resides in the recycling endosome membrane. It is found in the endoplasmic reticulum membrane. It localises to the mitochondrion membrane. It carries out the reaction a 1,2-diacyl-sn-glycero-3-phosphocholine(in) = a 1,2-diacyl-sn-glycero-3-phosphocholine(out). The enzyme catalyses a 1,2-diacyl-sn-glycero-3-phospho-L-serine(in) = a 1,2-diacyl-sn-glycero-3-phospho-L-serine(out). The catalysed reaction is a 1,2-diacyl-sn-glycero-3-phosphoethanolamine(in) = a 1,2-diacyl-sn-glycero-3-phosphoethanolamine(out). Its function is as follows. Phospholipid scramblase involved in autophagy by mediating autophagosomal membrane expansion. Cycles between the preautophagosomal structure/phagophore assembly site (PAS) and the cytoplasmic vesicle pool and supplies membrane for the growing autophagosome. Lipid scramblase activity plays a key role in preautophagosomal structure/phagophore assembly by distributing the phospholipids that arrive through ATG2 (ATG2A or ATG2B) from the cytoplasmic to the luminal leaflet of the bilayer, thereby driving autophagosomal membrane expansion. Also required to supply phosphatidylinositol 4-phosphate to the autophagosome initiation site by recruiting the phosphatidylinositol 4-kinase beta (PI4KB) in a process dependent on ARFIP2, but not ARFIP1. In addition to autophagy, also plays a role in necrotic cell death. The chain is Autophagy-related protein 9A from Mus musculus (Mouse).